The sequence spans 222 residues: UPF0758 protein YicR (222 aa).

Residues 100-222 (PLLSPEMTRE…YVSFAERGWI (123 aa)) form the MPN domain. 3 residues coordinate Zn(2+): histidine 171, histidine 173, and aspartate 184. Positions 171 to 184 (HNHPSGCAEPSKAD) match the JAMM motif motif.

It belongs to the UPF0758 family. YicR subfamily.

The sequence is that of UPF0758 protein YicR from Escherichia coli O45:K1 (strain S88 / ExPEC).